The primary structure comprises 62 residues: UPF0434 protein FTL_1400 (62 aa).

It belongs to the UPF0434 family.

This chain is UPF0434 protein FTL_1400, found in Francisella tularensis subsp. holarctica (strain LVS).